Consider the following 425-residue polypeptide: Serine--tRNA ligase (425 aa).

230–232 (TSE) contacts L-serine. ATP is bound by residues 261–263 (RRE) and Val277. Glu284 provides a ligand contact to L-serine. ATP is bound at residue 348–351 (ELTS). Thr382 contacts L-serine.

Belongs to the class-II aminoacyl-tRNA synthetase family. Type-1 seryl-tRNA synthetase subfamily. As to quaternary structure, homodimer. The tRNA molecule binds across the dimer.

It is found in the cytoplasm. It catalyses the reaction tRNA(Ser) + L-serine + ATP = L-seryl-tRNA(Ser) + AMP + diphosphate + H(+). The catalysed reaction is tRNA(Sec) + L-serine + ATP = L-seryl-tRNA(Sec) + AMP + diphosphate + H(+). The protein operates within aminoacyl-tRNA biosynthesis; selenocysteinyl-tRNA(Sec) biosynthesis; L-seryl-tRNA(Sec) from L-serine and tRNA(Sec): step 1/1. Its function is as follows. Catalyzes the attachment of serine to tRNA(Ser). Is also able to aminoacylate tRNA(Sec) with serine, to form the misacylated tRNA L-seryl-tRNA(Sec), which will be further converted into selenocysteinyl-tRNA(Sec). This is Serine--tRNA ligase from Streptomyces coelicolor (strain ATCC BAA-471 / A3(2) / M145).